The primary structure comprises 154 residues: Acidic phospholipase A2 2 (154 aa).

An N-terminal signal peptide occupies residues 1 to 19; that stretch reads MHPAHLLVPLGVCVSLLGA. Residues 20–27 constitute a propeptide that is removed on maturation; sequence ARIPPLPL. Cystine bridges form between Cys38–Cys104, Cys54–Cys153, Cys56–Cys72, Cys71–Cys132, Cys78–Cys125, Cys88–Cys118, and Cys111–Cys123. Residues Tyr55, Gly57, and Gly59 each coordinate Ca(2+). His75 is an active-site residue. Asp76 serves as a coordination point for Ca(2+). The active site involves Asp126.

This sequence belongs to the phospholipase A2 family. Group I subfamily. D49 sub-subfamily. In terms of assembly, monomer. Requires Ca(2+) as cofactor. In terms of tissue distribution, expressed by the venom gland.

Its subcellular location is the secreted. The catalysed reaction is a 1,2-diacyl-sn-glycero-3-phosphocholine + H2O = a 1-acyl-sn-glycero-3-phosphocholine + a fatty acid + H(+). In terms of biological role, snake venom phospholipase A2 (PLA2) that shows moderate enzymatic activity and exhibits procoagulant activity. PLA2 catalyzes the calcium-dependent hydrolysis of the 2-acyl groups in 3-sn-phosphoglycerides. The sequence is that of Acidic phospholipase A2 2 from Pseudonaja textilis (Eastern brown snake).